We begin with the raw amino-acid sequence, 247 residues long: Triosephosphate isomerase (247 aa).

A substrate-binding site is contributed by 8–10 (NWK). Residue histidine 94 is the Electrophile of the active site. Residue glutamate 165 is the Proton acceptor of the active site. Substrate-binding residues include glycine 171 and serine 210.

The protein belongs to the triosephosphate isomerase family. As to quaternary structure, homodimer.

It is found in the cytoplasm. It carries out the reaction D-glyceraldehyde 3-phosphate = dihydroxyacetone phosphate. It participates in carbohydrate biosynthesis; gluconeogenesis. The protein operates within carbohydrate degradation; glycolysis; D-glyceraldehyde 3-phosphate from glycerone phosphate: step 1/1. In terms of biological role, involved in the gluconeogenesis. Catalyzes stereospecifically the conversion of dihydroxyacetone phosphate (DHAP) to D-glyceraldehyde-3-phosphate (G3P). This Aquifex aeolicus (strain VF5) protein is Triosephosphate isomerase.